The following is a 184-amino-acid chain: Photosystem I assembly protein Ycf4 (184 aa).

The next 2 membrane-spanning stretches (helical) occupy residues 22–42 (FCWAIILFLGSLGFLLIGISS) and 57–77 (ILFFPQGIVMSFYGLAGLFIS).

This sequence belongs to the Ycf4 family.

The protein resides in the plastid. Its subcellular location is the chloroplast thylakoid membrane. In terms of biological role, seems to be required for the assembly of the photosystem I complex. This Populus trichocarpa (Western balsam poplar) protein is Photosystem I assembly protein Ycf4.